Reading from the N-terminus, the 448-residue chain is tRNA-2-methylthio-N(6)-dimethylallyladenosine synthase (448 aa).

One can recognise an MTTase N-terminal domain in the interval lysine 2–glutamate 119. [4Fe-4S] cluster is bound by residues cysteine 11, cysteine 48, cysteine 82, cysteine 156, cysteine 160, and cysteine 163. The 236-residue stretch at arginine 142–serine 377 folds into the Radical SAM core domain. The TRAM domain occupies glutamine 378–glutamate 444.

The protein belongs to the methylthiotransferase family. MiaB subfamily. In terms of assembly, monomer. [4Fe-4S] cluster serves as cofactor.

Its subcellular location is the cytoplasm. It carries out the reaction N(6)-dimethylallyladenosine(37) in tRNA + (sulfur carrier)-SH + AH2 + 2 S-adenosyl-L-methionine = 2-methylsulfanyl-N(6)-dimethylallyladenosine(37) in tRNA + (sulfur carrier)-H + 5'-deoxyadenosine + L-methionine + A + S-adenosyl-L-homocysteine + 2 H(+). Catalyzes the methylthiolation of N6-(dimethylallyl)adenosine (i(6)A), leading to the formation of 2-methylthio-N6-(dimethylallyl)adenosine (ms(2)i(6)A) at position 37 in tRNAs that read codons beginning with uridine. In Polynucleobacter necessarius subsp. necessarius (strain STIR1), this protein is tRNA-2-methylthio-N(6)-dimethylallyladenosine synthase.